The sequence spans 129 residues: Small ribosomal subunit protein uS11 (129 aa).

This sequence belongs to the universal ribosomal protein uS11 family. Part of the 30S ribosomal subunit. Interacts with proteins S7 and S18. Binds to IF-3.

Its function is as follows. Located on the platform of the 30S subunit, it bridges several disparate RNA helices of the 16S rRNA. Forms part of the Shine-Dalgarno cleft in the 70S ribosome. The polypeptide is Small ribosomal subunit protein uS11 (Macrococcus caseolyticus (strain JCSC5402) (Macrococcoides caseolyticum)).